The sequence spans 345 residues: L-threonine 3-dehydrogenase (345 aa).

Cys-39 contacts Zn(2+). Active-site charge relay system residues include Thr-41 and His-44. Positions 64, 65, 94, 97, 100, and 108 each coordinate Zn(2+). NAD(+) contacts are provided by residues Ile-176, Asp-196, Arg-201, 263-265 (LGI), and 287-288 (VY).

It belongs to the zinc-containing alcohol dehydrogenase family. Homotetramer. Zn(2+) serves as cofactor.

Its subcellular location is the cytoplasm. The catalysed reaction is L-threonine + NAD(+) = (2S)-2-amino-3-oxobutanoate + NADH + H(+). Its pathway is amino-acid degradation; L-threonine degradation via oxydo-reductase pathway; glycine from L-threonine: step 1/2. In terms of biological role, catalyzes the NAD(+)-dependent oxidation of L-threonine to 2-amino-3-ketobutyrate. The polypeptide is L-threonine 3-dehydrogenase (Anaeromyxobacter dehalogenans (strain 2CP-C)).